We begin with the raw amino-acid sequence, 46 residues long: Esculentin-1HSa (46 aa).

A disulfide bridge links Cys-40 with Cys-46.

In terms of tissue distribution, expressed by the skin glands.

Its subcellular location is the secreted. Its function is as follows. Has antibacterial activity against the Gram-positive bacterium S.aureus ATCC 25923 (MIC=12 uM) and the Gram-negative bacterium E.coli ATCC 25726 (MIC=12 uM). The sequence is that of Esculentin-1HSa from Odorrana hosii (Hose's rock frog).